The chain runs to 249 residues: MATKRIGDEPAYVLHRYDWSESSLILEIFTRQYGRVALVARGAKKPSSSFRPILLPLQPLHIAFGGDAEIRTLKSAEWQGGHVMPTGDALLSGYYLNELLMRLLARDDPHPVLFDAYSATVQLLASQSVDTLQLALRAFELRLLRDIGLLPLLDAETATLAPLEPQARYVLVAEAGLRQAHDDDRNSLPGVQWQALQQALGDNALFSDTVRACIPGLNELKTQLRALLHYHCGVKVLKTRQMMMDLQAL.

Belongs to the RecO family.

Functionally, involved in DNA repair and RecF pathway recombination. This chain is DNA repair protein RecO, found in Polaromonas sp. (strain JS666 / ATCC BAA-500).